The primary structure comprises 605 residues: Exo-beta-1,3-glucanase (605 aa).

Residues 1 to 23 (MHVPPTDPARSAPPASPHRRRRP) are disordered. Positions 1 to 44 (MHVPPTDPARSAPPASPHRRRRPKALGLTALAAAMLMAVPTTQA) are cleaved as a signal peptide. Residues Gln-174, 194-196 (YGW), Gln-217, 446-449 (WRAD), and 480-481 (EH) each bind substrate. Catalysis depends on Glu-502, which acts as the Proton donor. Tyr-505 is a substrate binding site.

It belongs to the glycosyl hydrolase 55 family.

It is found in the secreted. The enzyme catalyses Successive hydrolysis of beta-D-glucose units from the non-reducing ends of (1-&gt;3)-beta-D-glucans, releasing alpha-glucose.. Functionally, exo-beta-1,3-glucanase that specifically hydrolyzes laminarin and laminarioligosaccharides, producing glucose and laminaribiose as end products. In Streptomyces sp. (strain SirexAA-E / ActE), this protein is Exo-beta-1,3-glucanase.